Here is a 115-residue protein sequence, read N- to C-terminus: UPF0235 protein CTA_0423 (115 aa).

The protein belongs to the UPF0235 family.

The protein is UPF0235 protein CTA_0423 of Chlamydia trachomatis serovar A (strain ATCC VR-571B / DSM 19440 / HAR-13).